Here is a 130-residue protein sequence, read N- to C-terminus: Zinc finger A20 and AN1 domain-containing stress-associated protein 10 (130 aa).

An A20-type zinc finger spans residues 4–38 (ETEALPCEGGCGLYGTRVNNNLCSLCYKKSVLQHS). Residues Cys10, Cys14, Cys26, Cys29, Cys71, Cys74, Cys85, Cys87, Cys92, His95, His101, and Cys103 each contribute to the Zn(2+) site. The AN1-type zinc-finger motif lies at 65 to 111 (PVKKRRCGICKRKVGMLGFKCRCGHMFCGSHRYPEEHSCPFDYKQSG).

Functionally, may be involved in environmental stress response. This Arabidopsis thaliana (Mouse-ear cress) protein is Zinc finger A20 and AN1 domain-containing stress-associated protein 10 (SAP10).